The primary structure comprises 347 residues: MEGCRETEVTNGSNGGLEFNPMKEYMILSSGQQIAVAVLCTLMGLLSALENMAVLYIILSSRRLRRKPSYLFISSLAGADFLASVIFACNFVIFHVFHGVDSNAIFLLKIGSVTMTFTASVGSLLLTAVDRYLCLCYPPTYKALVTRGRALVALCVMWVLSALISYLPLMGWTCCPSPCSELFPLIPNDYLLGWLLFIAILFSGIIYTYGYVLWKAHRHVATLAEHQDRQVPGIARMRLDVRLAKTLGLVLAVLLICWFPALALMGHSLVTTLSDQVKEAFAFCSMLCLVNSMVNPIIYALRSGEIRSAAQHCLIGWKKYLQGLGPEGKEEGPRSSVTETEADVKTT.

Topologically, residues 1–33 (MEGCRETEVTNGSNGGLEFNPMKEYMILSSGQQ) are extracellular. Residue asparagine 11 is glycosylated (N-linked (GlcNAc...) asparagine). The chain crosses the membrane as a helical span at residues 34–59 (IAVAVLCTLMGLLSALENMAVLYIIL). Residues 60-71 (SSRRLRRKPSYL) lie on the Cytoplasmic side of the membrane. Residues 72–92 (FISSLAGADFLASVIFACNFV) form a helical membrane-spanning segment. Over 93–104 (IFHVFHGVDSNA) the chain is Extracellular. The chain crosses the membrane as a helical span at residues 105-129 (IFLLKIGSVTMTFTASVGSLLLTAV). The Cytoplasmic segment spans residues 130 to 149 (DRYLCLCYPPTYKALVTRGR). The chain crosses the membrane as a helical span at residues 150–172 (ALVALCVMWVLSALISYLPLMGW). At 173–188 (TCCPSPCSELFPLIPN) the chain is on the extracellular side. A helical membrane pass occupies residues 189–214 (DYLLGWLLFIAILFSGIIYTYGYVLW). Residues 215 to 246 (KAHRHVATLAEHQDRQVPGIARMRLDVRLAKT) are Cytoplasmic-facing. Residues 247–267 (LGLVLAVLLICWFPALALMGH) form a helical membrane-spanning segment. Residues 268–279 (SLVTTLSDQVKE) lie on the Extracellular side of the membrane. Residues 280–301 (AFAFCSMLCLVNSMVNPIIYAL) traverse the membrane as a helical segment. Residues 302–347 (RSGEIRSAAQHCLIGWKKYLQGLGPEGKEEGPRSSVTETEADVKTT) lie on the Cytoplasmic side of the membrane. A disordered region spans residues 326 to 347 (PEGKEEGPRSSVTETEADVKTT). Phosphoserine occurs at positions 335 and 336. Residue threonine 338 is modified to Phosphothreonine.

The protein belongs to the G-protein coupled receptor 1 family. As to expression, expressed by cells of hematopoietic origin. Expressed in skin in suprabasal layers and hair follicles, in brain by neurons and glial cells and by osteoblasts, osteocytes, osteoclasts (at protein level).

It localises to the cell membrane. The protein resides in the cell projection. Its subcellular location is the dendrite. The protein localises to the perikaryon. Its function is as follows. Heterotrimeric G protein-coupled receptor for endocannabinoid 2-arachidonoylglycerol mediating inhibition of adenylate cyclase. May function in inflammatory response, nociceptive transmission and bone homeostasis. The protein is Cannabinoid receptor 2 (Cnr2) of Mus musculus (Mouse).